The primary structure comprises 247 residues: Flavin-dependent thymidylate synthase (247 aa).

Residues 1–237 (MRVRLLEATE…PHTFEYYDAE (237 aa)) form the ThyX domain. DUMP contacts are provided by residues 85 to 88 (QLTR), 98 to 100 (SMR), and R176. Position 88–90 (88–90 (RHR)) interacts with FAD. The ThyX motif signature appears at 88 to 98 (RHRHASFDVQS). FAD is bound by residues 192-194 (NPR) and H198. Position 203 (R203) interacts with dUMP. Catalysis depends on R203, which acts as the Involved in ionization of N3 of dUMP, leading to its activation.

It belongs to the thymidylate synthase ThyX family. In terms of assembly, homotetramer. The cofactor is FAD.

The catalysed reaction is dUMP + (6R)-5,10-methylene-5,6,7,8-tetrahydrofolate + NADPH + H(+) = dTMP + (6S)-5,6,7,8-tetrahydrofolate + NADP(+). Its pathway is pyrimidine metabolism; dTTP biosynthesis. Its function is as follows. Catalyzes the reductive methylation of 2'-deoxyuridine-5'-monophosphate (dUMP) to 2'-deoxythymidine-5'-monophosphate (dTMP) while utilizing 5,10-methylenetetrahydrofolate (mTHF) as the methyl donor, and NADPH and FADH(2) as the reductant. In Halobacterium salinarum (strain ATCC 700922 / JCM 11081 / NRC-1) (Halobacterium halobium), this protein is Flavin-dependent thymidylate synthase.